A 291-amino-acid polypeptide reads, in one-letter code: 11-beta-hydroxysteroid dehydrogenase 1 (291 aa).

The Cytoplasmic segment spans residues 1–7 (MAFMKTH). The chain crosses the membrane as a helical; Signal-anchor for type II membrane protein span at residues 8–24 (LLPILGLFMAYYYYSAY). At 25 to 291 (EEFRPEMLQG…TSYSTDGLIN (267 aa)) the chain is on the lumenal side. NADP(+) is bound by residues 41-67 (GASKGIGREMAYHLAKMGAHVVVTARS), 92-93 (TM), and 119-121 (NHI). N-linked (GlcNAc...) asparagine glycans are attached at residues Asn123 and Asn162. Position 170 (Ser170) interacts with substrate. Tyr183 (proton acceptor) is an active-site residue. Position 183–187 (183–187 (YSASK)) interacts with NADP(+). Asn207 is a glycosylation site (N-linked (GlcNAc...) asparagine). 218–222 (IDTDT) contacts NADP(+).

The protein belongs to the short-chain dehydrogenases/reductases (SDR) family. In terms of assembly, homodimer. As to expression, abundantly expressed in the liver, followed by fibroblasts, also detected in the brain, lung, heart, and ovary, and in smaller amounts in kidney, skin, and spleen.

The protein resides in the endoplasmic reticulum membrane. The enzyme catalyses an 11beta-hydroxysteroid + NADP(+) = an 11-oxosteroid + NADPH + H(+). It catalyses the reaction cortisone + NADPH + H(+) = cortisol + NADP(+). It carries out the reaction corticosterone + NADP(+) = 11-dehydrocorticosterone + NADPH + H(+). The catalysed reaction is a 7beta-hydroxysteroid + NADP(+) = a 7-oxosteroid + NADPH + H(+). The enzyme catalyses 7-oxocholesterol + NADPH + H(+) = 7beta-hydroxycholesterol + NADP(+). It catalyses the reaction chenodeoxycholate + NADP(+) = 7-oxolithocholate + NADPH + H(+). It carries out the reaction 7-oxolithocholate + NADPH + H(+) = ursodeoxycholate + NADP(+). The catalysed reaction is glycochenodeoxycholate + NADP(+) = 7-oxoglycolithocholate + NADPH + H(+). The enzyme catalyses taurochenodeoxycholate + NADP(+) = 7-oxotaurolithocholate + NADPH + H(+). It catalyses the reaction tauroursodeoxycholate + NADP(+) = 7-oxotaurolithocholate + NADPH + H(+). It carries out the reaction glycoursodeoxycholate + NADP(+) = 7-oxoglycolithocholate + NADPH + H(+). The catalysed reaction is 7-oxopregnenolone + NADPH + H(+) = 7beta-hydroxypregnenolone + NADP(+). The enzyme catalyses 3beta,7alpha-dihydroxyandrost-5-en-17-one + NADP(+) = 3beta-hydroxy-5-androstene-7,17-dione + NADPH + H(+). It catalyses the reaction 3beta-hydroxy-5-androstene-7,17-dione + NADPH + H(+) = 3beta,7beta-dihydroxyandrost-5-en-17-one + NADP(+). It carries out the reaction 3beta-hydroxy-5alpha-androstane-7,17-dione + NADPH + H(+) = 3beta,7beta-dihydroxy-5alpha-androstan-17-one + NADP(+). It functions in the pathway steroid metabolism. In terms of biological role, controls the reversible conversion of biologically active glucocorticoids such as cortisone to cortisol, and 11-dehydrocorticosterone to corticosterone in the presence of NADP(H). Participates in the corticosteroid receptor-mediated anti-inflammatory response, as well as metabolic and homeostatic processes. Bidirectional in vitro, predominantly functions as a reductase in vivo, thereby increasing the concentration of active glucocorticoids. It has broad substrate specificity, besides glucocorticoids, it accepts other steroid and sterol substrates. Interconverts 7-oxo- and 7-hydroxy-neurosteroids such as 7-oxopregnenolone and 7beta-hydroxypregnenolone, 7-oxodehydroepiandrosterone (3beta-hydroxy-5-androstene-7,17-dione) and 7beta-hydroxydehydroepiandrosterone (3beta,7beta-dihydroxyandrost-5-en-17-one), among others. Catalyzes the stereo-specific conversion of the major dietary oxysterol, 7-ketocholesterol (7-oxocholesterol), into the more polar 7-beta-hydroxycholesterol metabolite. 7-oxocholesterol is one of the most important oxysterols, it participates in several events such as induction of apoptosis, accumulation in atherosclerotic lesions, lipid peroxidation, and induction of foam cell formation. Mediates the 7-oxo reduction of 7-oxolithocholate mainly to chenodeoxycholate, and to a lesser extent to ursodeoxycholate, both in its free form and when conjugated to glycine or taurine, providing a link between glucocorticoid activation and bile acid metabolism. Catalyzes the synthesis of 7-beta-25-dihydroxycholesterol from 7-oxo-25-hydroxycholesterol in vitro, which acts as a ligand for the G-protein-coupled receptor (GPCR) Epstein-Barr virus-induced gene 2 (EBI2) and may thereby regulate immune cell migration. This is 11-beta-hydroxysteroid dehydrogenase 1 (HSD11B1) from Saimiri sciureus (Common squirrel monkey).